A 200-amino-acid polypeptide reads, in one-letter code: ATP synthase subunit delta', mitochondrial (200 aa).

The transit peptide at 1-21 directs the protein to the mitochondrion; it reads MFRHSSRLLARATTMGWRRPF.

This sequence belongs to the ATPase epsilon chain family. F-type ATPases have 2 components, CF(1) - the catalytic core - and CF(0) - the membrane proton channel. CF(1) has five subunits: alpha(3), beta(3), gamma(1), delta(1), epsilon(1). CF(0) has three main subunits: a, b and c.

It is found in the mitochondrion. It localises to the mitochondrion inner membrane. Functionally, mitochondrial membrane ATP synthase (F(1)F(0) ATP synthase or Complex V) produces ATP from ADP in the presence of a proton gradient across the membrane which is generated by electron transport complexes of the respiratory chain. F-type ATPases consist of two structural domains, F(1) - containing the extramembraneous catalytic core, and F(0) - containing the membrane proton channel, linked together by a central stalk and a peripheral stalk. During catalysis, ATP turnover in the catalytic domain of F(1) is coupled via a rotary mechanism of the central stalk subunits to proton translocation. Part of the complex F(1) domain and of the central stalk which is part of the complex rotary element. Rotation of the central stalk against the surrounding alpha(3)beta(3) subunits leads to hydrolysis of ATP in three separate catalytic sites on the beta subunits. The sequence is that of ATP synthase subunit delta', mitochondrial from Ipomoea batatas (Sweet potato).